The chain runs to 477 residues: UDP-N-acetylmuramoylalanine--D-glutamate ligase (477 aa).

ATP is bound at residue 127–133 (GTNGKTT).

It belongs to the MurCDEF family.

It localises to the cytoplasm. The enzyme catalyses UDP-N-acetyl-alpha-D-muramoyl-L-alanine + D-glutamate + ATP = UDP-N-acetyl-alpha-D-muramoyl-L-alanyl-D-glutamate + ADP + phosphate + H(+). The protein operates within cell wall biogenesis; peptidoglycan biosynthesis. Its function is as follows. Cell wall formation. Catalyzes the addition of glutamate to the nucleotide precursor UDP-N-acetylmuramoyl-L-alanine (UMA). This Prochlorococcus marinus (strain MIT 9515) protein is UDP-N-acetylmuramoylalanine--D-glutamate ligase.